We begin with the raw amino-acid sequence, 76 residues long: Small ribosomal subunit protein bS16c (76 aa).

Belongs to the bacterial ribosomal protein bS16 family.

It is found in the plastid. The protein localises to the chloroplast. This chain is Small ribosomal subunit protein bS16c, found in Guillardia theta (Cryptophyte).